The primary structure comprises 459 residues: Protoheme IX farnesyltransferase (459 aa).

The segment at Met-1 to Leu-184 is unknown. 12 helical membrane-spanning segments follow: residues Phe-9–Thr-29, Ala-66–Ala-86, Ala-93–Met-113, Val-123–Leu-143, Leu-184–Gly-204, Ala-211–Phe-231, Leu-262–Leu-282, Ala-284–Pro-304, Trp-325–Leu-345, His-382–Gly-402, Leu-403–Ile-423, and Phe-438–Val-458. The tract at residues Met-185–Val-459 is protoheme IX prenyltransferase.

The protein in the C-terminal section; belongs to the UbiA prenyltransferase family. Protoheme IX farnesyltransferase subfamily.

Its subcellular location is the cell membrane. The enzyme catalyses heme b + (2E,6E)-farnesyl diphosphate + H2O = Fe(II)-heme o + diphosphate. The protein operates within porphyrin-containing compound metabolism; heme O biosynthesis; heme O from protoheme: step 1/1. In terms of biological role, converts heme B (protoheme IX) to heme O by substitution of the vinyl group on carbon 2 of heme B porphyrin ring with a hydroxyethyl farnesyl side group. The sequence is that of Protoheme IX farnesyltransferase (ctaB) from Halobacterium salinarum (strain ATCC 29341 / DSM 671 / R1).